A 244-amino-acid polypeptide reads, in one-letter code: Ureidoacrylate amidohydrolase RutB (244 aa).

The active-site Proton acceptor is the aspartate 38. Residue lysine 147 is part of the active site. The active-site Nucleophile is cysteine 180.

It belongs to the isochorismatase family. RutB subfamily.

It catalyses the reaction (Z)-3-ureidoacrylate + H2O + H(+) = (Z)-3-aminoacrylate + NH4(+) + CO2. The catalysed reaction is (Z)-3-ureidoacrylate + H2O = (Z)-3-aminoacrylate + carbamate + H(+). It carries out the reaction (Z)-2-methylureidoacrylate + H2O + H(+) = (Z)-2-methylaminoacrylate + NH4(+) + CO2. Functionally, hydrolyzes ureidoacrylate to form aminoacrylate and carbamate. The carbamate hydrolyzes spontaneously, thereby releasing one of the nitrogen atoms of the pyrimidine ring as ammonia and one of its carbon atoms as CO2. The protein is Ureidoacrylate amidohydrolase RutB of Shigella sonnei (strain Ss046).